Reading from the N-terminus, the 252-residue chain is 3-deoxy-manno-octulosonate cytidylyltransferase (252 aa).

The protein belongs to the KdsB family.

The protein localises to the cytoplasm. It catalyses the reaction 3-deoxy-alpha-D-manno-oct-2-ulosonate + CTP = CMP-3-deoxy-beta-D-manno-octulosonate + diphosphate. It functions in the pathway nucleotide-sugar biosynthesis; CMP-3-deoxy-D-manno-octulosonate biosynthesis; CMP-3-deoxy-D-manno-octulosonate from 3-deoxy-D-manno-octulosonate and CTP: step 1/1. The protein operates within bacterial outer membrane biogenesis; lipopolysaccharide biosynthesis. Functionally, activates KDO (a required 8-carbon sugar) for incorporation into bacterial lipopolysaccharide in Gram-negative bacteria. This Nitratidesulfovibrio vulgaris (strain DP4) (Desulfovibrio vulgaris) protein is 3-deoxy-manno-octulosonate cytidylyltransferase.